Consider the following 533-residue polypeptide: Beta-glucosidase 10 (533 aa).

An N-terminal signal peptide occupies residues Met-1–Ala-23. Residue Gln-53 coordinates a beta-D-glucoside. A glycan (N-linked (GlcNAc...) asparagine) is linked at Asn-122. A beta-D-glucoside is bound by residues His-157 and Asn-202–Glu-203. Glu-203 (proton donor) is an active-site residue. An intrachain disulfide couples Cys-222 to Cys-230. Tyr-369 lines the a beta-D-glucoside pocket. Asn-384 is a glycosylation site (N-linked (GlcNAc...) asparagine). Glu-440 contacts a beta-D-glucoside. Residue Glu-440 is the Nucleophile of the active site. Asn-448 carries an N-linked (GlcNAc...) asparagine glycan. A beta-D-glucoside-binding positions include Trp-489, Glu-496–Trp-497, and Phe-505.

The protein belongs to the glycosyl hydrolase 1 family.

It carries out the reaction Hydrolysis of terminal, non-reducing beta-D-glucosyl residues with release of beta-D-glucose.. This chain is Beta-glucosidase 10 (BGLU10), found in Oryza sativa subsp. japonica (Rice).